Consider the following 185-residue polypeptide: Crossover junction endodeoxyribonuclease RuvC (185 aa).

Catalysis depends on residues D7, E68, and D141. Residues D7, E68, and D141 each contribute to the Mg(2+) site.

Belongs to the RuvC family. Homodimer which binds Holliday junction (HJ) DNA. The HJ becomes 2-fold symmetrical on binding to RuvC with unstacked arms; it has a different conformation from HJ DNA in complex with RuvA. In the full resolvosome a probable DNA-RuvA(4)-RuvB(12)-RuvC(2) complex forms which resolves the HJ. Requires Mg(2+) as cofactor.

It is found in the cytoplasm. The enzyme catalyses Endonucleolytic cleavage at a junction such as a reciprocal single-stranded crossover between two homologous DNA duplexes (Holliday junction).. Functionally, the RuvA-RuvB-RuvC complex processes Holliday junction (HJ) DNA during genetic recombination and DNA repair. Endonuclease that resolves HJ intermediates. Cleaves cruciform DNA by making single-stranded nicks across the HJ at symmetrical positions within the homologous arms, yielding a 5'-phosphate and a 3'-hydroxyl group; requires a central core of homology in the junction. The consensus cleavage sequence is 5'-(A/T)TT(C/G)-3'. Cleavage occurs on the 3'-side of the TT dinucleotide at the point of strand exchange. HJ branch migration catalyzed by RuvA-RuvB allows RuvC to scan DNA until it finds its consensus sequence, where it cleaves and resolves the cruciform DNA. The polypeptide is Crossover junction endodeoxyribonuclease RuvC (Helicobacter hepaticus (strain ATCC 51449 / 3B1)).